The following is a 556-amino-acid chain: ATP synthase subunit alpha 2 (556 aa).

G177–T184 provides a ligand contact to ATP. A disordered region spans residues G514–R556. Over residues G546–R556 the composition is skewed to low complexity.

This sequence belongs to the ATPase alpha/beta chains family. As to quaternary structure, F-type ATPases have 2 components, CF(1) - the catalytic core - and CF(0) - the membrane proton channel. CF(1) has five subunits: alpha(3), beta(3), gamma(1), delta(1), epsilon(1). CF(0) has three main subunits: a(1), b(2) and c(9-12). The alpha and beta chains form an alternating ring which encloses part of the gamma chain. CF(1) is attached to CF(0) by a central stalk formed by the gamma and epsilon chains, while a peripheral stalk is formed by the delta and b chains.

It is found in the cell inner membrane. It carries out the reaction ATP + H2O + 4 H(+)(in) = ADP + phosphate + 5 H(+)(out). Functionally, produces ATP from ADP in the presence of a proton gradient across the membrane. The alpha chain is a regulatory subunit. This chain is ATP synthase subunit alpha 2, found in Burkholderia thailandensis (strain ATCC 700388 / DSM 13276 / CCUG 48851 / CIP 106301 / E264).